A 177-amino-acid chain; its full sequence is MACCQTSFCGFPSCSTSGTCGSSCCQPSCCETSSCQPRCCETSCCQPSCCQTSFCGFPSFSTGGTCDSSCCQPSCCETSCCQPSCYQTSSCGTGCGIGGGIGYGQEGSSGAVSTRIRWCRPDCRVEGTCLPPCCVVSCTPPSCCQLHHAEASCCRPSYCGQSCCRPVCCCYCSEPTC.

It belongs to the KRTAP type 1 family. In terms of assembly, interacts with hair keratins. As to expression, expressed in the middle/upper portions of the hair cortex, in the region termed the keratogenous zone.

Functionally, in the hair cortex, hair keratin intermediate filaments are embedded in an interfilamentous matrix, consisting of hair keratin-associated proteins (KRTAP), which are essential for the formation of a rigid and resistant hair shaft through their extensive disulfide bond cross-linking with abundant cysteine residues of hair keratins. The matrix proteins include the high-sulfur and high-glycine-tyrosine keratins. This is Keratin-associated protein 1-1 (KRTAP1-1) from Homo sapiens (Human).